The chain runs to 2703 residues: Neurogenic locus Notch protein (2703 aa).

Positions 1-52 are cleaved as a signal peptide; sequence MQSQRSRRRSRAPNTWICFWINKMHAVASLPASLPLLLLTLAFANLPNTVRG. Over 53-1745 the chain is Extracellular; sequence TDTALVAASC…NGEPPANVKY (1693 aa). EGF-like domains lie at 58–95, 96–136, 139–176, and 177–215; these read VAASCTSVGCQNGGTCVTQLNGKTYCACDSHYVGDYCE, HRNP…SLCE, VPNACDHVTCLNGGTCQLKTLEEYTCACANGYTGERCE, and TKNLCASSPCRNGATCTALAGSSSFTCSCPPGFTGDTCS. Disulfide bonds link Cys-62–Cys-73, Cys-67–Cys-83, Cys-85–Cys-94, Cys-100–Cys-111, Cys-105–Cys-124, Cys-126–Cys-135, Cys-143–Cys-154, Cys-148–Cys-164, Cys-166–Cys-175, Cys-181–Cys-192, Cys-186–Cys-203, Cys-205–Cys-214, Cys-221–Cys-232, Cys-226–Cys-241, Cys-243–Cys-252, Cys-259–Cys-270, Cys-264–Cys-279, Cys-281–Cys-290, Cys-297–Cys-308, Cys-302–Cys-317, Cys-319–Cys-328, Cys-335–Cys-349, Cys-343–Cys-358, and Cys-360–Cys-369. Thr-72 carries an O-linked (Fuc...) threonine glycan. The O-linked (Fuc...) threonine glycan is linked to Thr-110. Residue Thr-153 is glycosylated (O-linked (Fuc...) threonine). Ser-183 carries O-linked (Glc...) serine glycosylation. A glycan (O-linked (Fuc...) threonine) is linked at Thr-191. Thr-210 carries an O-linked (GlcNAc...) threonine glycan. Positions 217-253 constitute an EGF-like 5; calcium-binding domain; the sequence is DIEECQSNPCKYGGTCVNTHGSYQCMCPTGYTGKDCD. An O-linked (Glc...) serine glycan is attached at Ser-223. Thr-231 carries an O-linked (Fuc...) threonine glycan. One can recognise an EGF-like 6 domain in the interval 255 to 291; the sequence is KYKPCSPSPCQNGGICRSNGLSYECKCPKGFEGKNCE. The EGF-like 7; calcium-binding domain maps to 293–329; that stretch reads NYDDCLGHLCQNGGTCIDGISDYTCRCPPNFTGRFCQ. Thr-307 is a glycosylation site (O-linked (Fuc...) threonine). An N-linked (GlcNAc...) asparagine glycan is attached at Asn-322. One can recognise an EGF-like 8; calcium-binding domain in the interval 331 to 370; it reads DVDECAQRDHPVCQNGATCTNTHGSYSCICVNGWAGLDCS. A glycan (O-linked (Fuc...) threonine) is linked at Thr-348. Asn-371 carries N-linked (GlcNAc...) asparagine glycosylation. Residues 372–408 enclose the EGF-like 9; calcium-binding domain; that stretch reads NTDDCKQAACFYGATCIDGVGSFYCQCTKGKTGLLCH. Disulfide bonds link Cys-376/Cys-387, Cys-381/Cys-396, Cys-398/Cys-407, Cys-413/Cys-424, Cys-418/Cys-435, Cys-437/Cys-446, Cys-453/Cys-465, and Cys-459/Cys-474. Thr-386 carries O-linked (Fuc...) threonine glycosylation. The EGF-like 10 domain maps to 409–447; sequence LDDACTSNPCHADAICDTSPINGSYACSCATGYKGVDCS. The O-linked (Glc...) serine glycan is linked to Ser-427. A glycan (N-linked (GlcNAc...) asparagine) is linked at Asn-430. The EGF-like 11; calcium-binding domain maps to 449-486; the sequence is DIDECDQGSPCEHNGICVNTPGSYRCNCSQGFTGPRCE. An N-linked (GlcNAc...) asparagine glycan is attached at Asn-475. 78 disulfides stabilise this stretch: Cys-476-Cys-485, Cys-492-Cys-503, Cys-497-Cys-512, Cys-514-Cys-523, Cys-530-Cys-541, Cys-535-Cys-550, Cys-552-Cys-561, Cys-568-Cys-579, Cys-573-Cys-588, Cys-590-Cys-599, Cys-606-Cys-616, Cys-611-Cys-625, Cys-627-Cys-636, Cys-643-Cys-654, Cys-648-Cys-663, Cys-665-Cys-674, Cys-681-Cys-692, Cys-686-Cys-701, Cys-703-Cys-712, Cys-719-Cys-730, Cys-724-Cys-739, Cys-741-Cys-750, Cys-757-Cys-768, Cys-762-Cys-777, Cys-779-Cys-788, Cys-795-Cys-806, Cys-800-Cys-815, Cys-817-Cys-826, Cys-833-Cys-844, Cys-838-Cys-853, Cys-855-Cys-864, Cys-871-Cys-882, Cys-876-Cys-893, Cys-895-Cys-904, Cys-911-Cys-923, Cys-917-Cys-932, Cys-934-Cys-943, Cys-950-Cys-961, Cys-955-Cys-970, Cys-972-Cys-981, Cys-988-Cys-999, Cys-993-Cys-1008, Cys-1010-Cys-1019, Cys-1026-Cys-1037, Cys-1031-Cys-1046, Cys-1048-Cys-1057, Cys-1064-Cys-1075, Cys-1069-Cys-1084, Cys-1086-Cys-1095, Cys-1102-Cys-1113, Cys-1107-Cys-1122, Cys-1124-Cys-1133, Cys-1155-Cys-1160, Cys-1171-Cys-1180, Cys-1187-Cys-1198, Cys-1192-Cys-1207, Cys-1209-Cys-1218, Cys-1225-Cys-1236, Cys-1230-Cys-1245, Cys-1247-Cys-1256, Cys-1263-Cys-1274, Cys-1268-Cys-1283, Cys-1285-Cys-1294, Cys-1301-Cys-1314, Cys-1306-Cys-1323, Cys-1325-Cys-1334, Cys-1341-Cys-1352, Cys-1346-Cys-1361, Cys-1363-Cys-1372, Cys-1379-Cys-1389, Cys-1384-Cys-1400, Cys-1402-Cys-1411, Cys-1419-Cys-1430, Cys-1424-Cys-1439, Cys-1441-Cys-1450, Cys-1482-Cys-1505, Cys-1487-Cys-1500, and Cys-1496-Cys-1512. A glycan (O-linked (GlcNAc...) threonine) is linked at Thr-481. The region spanning 488-524 is the EGF-like 12; calcium-binding domain; it reads NINECESHPCQNEGSCLDDPGTFRCVCMPGFTGTQCE. Ser-494 carries an O-linked (Glc...) serine glycan. A glycan (O-linked (Fuc...) serine) is linked at Ser-502. The O-linked (GlcNAc...) threonine glycan is linked to Thr-519. The region spanning 526 to 562 is the EGF-like 13; calcium-binding domain; sequence DIDECQSNPCLNDGTCHDKINGFKCSCALGFTGARCQ. Ser-532 carries O-linked (Glc...) serine glycosylation. Residues 564–600 enclose the EGF-like 14; calcium-binding domain; it reads NIDDCQSQPCRNRGICHDSIAGYSCECPPGYTGTSCE. Ser-570 carries O-linked (Glc...) serine glycosylation. The O-linked (GlcNAc...) threonine glycan is linked to Thr-595. The EGF-like 15; calcium-binding domain occupies 602-637; that stretch reads NINDCDSNPCHRGKCIDDVNSFKCLCDPGYTGYICQ. O-linked (Glc...) serine glycosylation occurs at Ser-608. In terms of domain architecture, EGF-like 16; calcium-binding spans 639–675; the sequence is QINECESNPCQFDGHCQDRVGSYYCQCQAGTSGKNCE. Residue Ser-645 is glycosylated (O-linked (Glc...) serine). One can recognise an EGF-like 17; calcium-binding domain in the interval 677-713; that stretch reads NVNECHSNPCNNGATCIDGINSYKCQCVPGFTGQHCE. The O-linked (Glc...) serine glycan is linked to Ser-683. Thr-691 carries an O-linked (Fuc...) threonine glycan. One can recognise an EGF-like 18; calcium-binding domain in the interval 715–751; it reads NVDECISSPCANNGVCIDQVNGYKCECPRGFYDAHCL. Ser-721 is a glycosylation site (O-linked (Glc...) serine). The EGF-like 19; calcium-binding domain maps to 753–789; the sequence is DVDECASNPCVNEGRCEDGINEFICHCPPGYTGKRCE. The O-linked (Glc...) serine glycan is linked to Ser-759. An EGF-like 20; calcium-binding domain is found at 791–827; it reads DIDECSSNPCQHGGTCYDKLNAFSCQCMPGYTGQKCE. Ser-797 carries O-linked (Glc...) serine glycosylation. O-linked (Fuc...) threonine glycosylation is present at Thr-805. Residue Thr-822 is glycosylated (O-linked (GlcNAc...) threonine). An EGF-like 21; calcium-binding domain is found at 829–865; the sequence is NIDDCVTNPCGNGGTCIDKVNGYKCVCKVPFTGRDCE. A glycan (O-linked (Fuc...) threonine) is linked at Thr-843. The region spanning 867–905 is the EGF-like 22 domain; sequence KMDPCASNRCKNEAKCTPSSNFLDFSCTCKLGYTGRYCD. Residues 907-944 form the EGF-like 23; calcium-binding domain; it reads DIDECSLSSPCRNGASCLNVPGSYRCLCTKGYEGRDCA. Ser-922 is a glycosylation site (O-linked (Fuc...) serine). In terms of domain architecture, EGF-like 24; calcium-binding spans 946-982; it reads NTDDCASFPCQNGGTCLDGIGDYSCLCVDGFDGKHCE. A glycan (O-linked (Glc...) serine) is linked at Ser-952. An O-linked (Fuc...) threonine glycan is attached at Thr-960. Residues 984–1020 enclose the EGF-like 25 domain; sequence DINECLSQPCQNGATCSQYVNSYTCTCPLGFSGINCQ. O-linked (Glc...) serine glycosylation is present at Ser-990. Thr-998 carries O-linked (Fuc...) threonine glycosylation. Residues 1022 to 1058 form the EGF-like 26; calcium-binding domain; it reads NDEDCTESSCLNGGSCIDGINGYNCSCLAGYSGANCQ. A glycan (O-linked (Fuc...) serine) is linked at Ser-1036. Asn-1045 carries N-linked (GlcNAc...) asparagine glycosylation. 3 EGF-like domains span residues 1060–1096, 1098–1134, and 1136–1181; these read KLNKCDSNPCLNGATCHEQNNEYTCHCPSGFTGKQCS, YVDWCGQSPCENGATCSQMKHQFSCKCSAGWTGKLCD, and QTIS…SYCQ. Ser-1066 carries an O-linked (Glc...) serine glycan. O-linked (Fuc...) threonine glycosylation occurs at Thr-1074. An O-linked (Fuc...) threonine glycan is attached at Thr-1112. N-linked (GlcNAc...) asparagine glycosylation occurs at Asn-1157. Positions 1183–1219 constitute an EGF-like 30; calcium-binding domain; it reads EIDECQSQPCQNGGTCRDLIGAYECQCRQGFQGQNCE. Ser-1189 carries an O-linked (Glc...) serine glycan. Residue Thr-1197 is glycosylated (O-linked (Fuc...) threonine). The region spanning 1221 to 1257 is the EGF-like 31; calcium-binding domain; it reads NIDDCAPNPCQNGGTCHDRVMNFSCSCPPGTMGIICE. The O-linked (Fuc...) threonine glycan is linked to Thr-1235. Asn-1242 carries an N-linked (GlcNAc...) asparagine glycan. The 37-residue stretch at 1259–1295 folds into the EGF-like 32; calcium-binding domain; sequence NKDDCKPGACHNNGSCIDRVGGFECVCQPGFVGARCE. Asn-1271 is a glycosylation site (N-linked (GlcNAc...) asparagine). Ser-1273 carries an O-linked (Fuc...) serine glycan. EGF-like domains follow at residues 1297–1335, 1337–1373, 1375–1412, and 1415–1451; these read DINECLSNPCSNAGTLDCVQLVNNYHCNCRPGHMGRHCE, KVDFCAQSPCQNGGNCNIRQSGHHCICNNGFYGKNCE, SGQDCDSNPCRVGNCVVADEGFGYRCECPRGTLGEHCE, and TLDECSPNPCAQGAACEDLLGDYECLCPSKWKGKRCD. Ser-1303 carries O-linked (Glc...) serine glycosylation. Ser-1381 carries O-linked (Glc...) serine glycosylation. LNR repeat units follow at residues 1482 to 1521, 1522 to 1557, and 1559 to 1599; these read CDKRGCTEKQGNGICDSDCNTYACNFDGNDCSLGINPWAN, CTANECWNKFKNGKCNEECNNAACHYDGHDCERKLK, and CDSL…TQSP. N-linked (GlcNAc...) asparagine glycosylation occurs at Asn-1521. Disulfide bonds link Cys-1522-Cys-1545, Cys-1527-Cys-1540, Cys-1536-Cys-1552, Cys-1559-Cys-1585, Cys-1567-Cys-1580, and Cys-1576-Cys-1592. Asn-1594 and Asn-1627 each carry an N-linked (GlcNAc...) asparagine glycan. Residues 1746-1766 form a helical membrane-spanning segment; it reads VITGIILVIIALAFFGMVLST. Residues 1767–2703 lie on the Cytoplasmic side of the membrane; sequence QRKRAHGVTW…ANKGSEAIYI (937 aa). The tract at residues 1810–1850 is disordered; that stretch reads QSQGVGQPGAHWSDDESDMPLPKRQRSDPVSGVGLGNNGGY. ANK repeat units follow at residues 1901 to 1945, 1950 to 1979, 1983 to 2013, 2017 to 2046, 2050 to 2079, 2083 to 2112, and 2116 to 2139; these read CGLT…ELNA, TGETSLHLAARFARADAAKRLLDAGADANC, TGRTPLHAAVAADAMGVFQILLRNRATNLNA, DGTTPLILAARLAIEGMVEDLITADADINA, SGKTALHWAAAVNNTEAVNILLMHHANRDA, KDETPLFLAAREGSYEACKALLDNFANREI, and MDRLPRDVASERLHHDIVRLLDEH. The interval 2172 to 2257 is disordered; it reads TVISAGNGGN…LTGGVSGVPG (86 aa). Over residues 2228–2238 the composition is skewed to low complexity; that stretch reads KKTSAASKKAA. Residues 2325–2328 are interaction with Nedd4; that stretch reads PPSY. Disordered stretches follow at residues 2399 to 2452, 2488 to 2524, 2579 to 2620, and 2632 to 2703; these read SGAG…PTSP, GGGGGGGVGQGPQNSPVSLGIISPTGSDMGIMLAPPQ, LDLN…PSSQ, and PSSQ…AIYI. Positions 2414–2429 are enriched in polar residues; that stretch reads PYSNQSPPHSVQSSLA. Ser-2447 carries the post-translational modification Phosphoserine. Residues 2488 to 2497 are compositionally biased toward gly residues; the sequence is GGGGGGGVGQ. The segment covering 2598-2619 has biased composition (low complexity); sequence PPSIQSSMSGSSPSTNMLSPSS. Over residues 2632 to 2653 the composition is skewed to polar residues; it reads PSSQHSGGHTPQHLVQTLDSYP. Residues 2659-2675 are compositionally biased toward low complexity; sequence SPGHWSSSSPRSNSDWS. Over residues 2677–2687 the composition is skewed to polar residues; that stretch reads GVQSPAANNLY.

The protein belongs to the NOTCH family. As to quaternary structure, homomer. Interacts with Su(H) when activated. Interacts with Dx via its ANK repeats. Interacts with Delta via the EGF repeats and the Delta EGF repeats. Interacts with Nedd4 and Su(dx). Interacts with O-fut1; the interaction glycosylates N and transports N to early endosomes. Interacts with Akap200; the interaction stabilizes N/Notch protein levels by preventing Cbl-mediated ubiquitination and subsequent lysosomal degradation of N/Notch. Post-translationally, upon binding its ligands such as Delta or Serrate, it is cleaved (S2 cleavage) in its extracellular domain, close to the transmembrane domain. S2 cleavage is probably mediated by Kuz. It is then cleaved (S3 cleavage) downstream of its transmembrane domain, releasing it from the cell membrane. S3 cleavage requires Psn. In terms of processing, O-glycosylated. Three forms of O-glycosylation (O-fucosylation, O-glucosylation and O-GlcNAcylation) are detected. O-fucosylated by O-fut1 and fng in the EGF repeat domain inhibits both Serrate/Ser- and Delta/Dl-binding. O-glucosylation by rumi in the endoplasmic reticulum is necessary for correct folding and signaling. Ubiquitinated by various ubiquitin ligases; which promotes ligand-independent endocytosis and proteasomal degradation. Ubiquitinated by Nedd4. May also be ubiquitinated by Su(dx) and Cbl. Mono-ubiquitinated, possibly by dx/deltex; this may be involved in the ESCRT-III mediated targeting to multivesicular bodies.

It is found in the cell membrane. Its subcellular location is the endosome. The protein localises to the multivesicular body. The protein resides in the nucleus. Its function is as follows. Essential signaling protein which has a major role in many developmental processes. Functions as a receptor for membrane-bound ligands Delta and Serrate to regulate cell-fate determination. Upon ligand activation, and releasing from the cell membrane, the Notch intracellular domain (NICD) forms a transcriptional activator complex with Su(H) (Suppressor of hairless) and activates genes of the E(spl) complex. Regulates oogenesis, the differentiation of the ectoderm and the development of the central and peripheral nervous system, eye, wing disk, muscles and segmental appendages such as antennae and legs, through lateral inhibition or induction. Regulates neuroblast self-renewal, identity and proliferation through the regulation of bHLH-O proteins; in larval brains, involved in the maintenance of type II neuroblast self-renewal and identity by suppressing erm expression together with pnt; might also regulate dpn expression through the activation of the transcriptional regulator Su(H). Targeted for ESCRT-mediated endosomal sequestration and lysosomal degradation by various E3 ubiquitin ligases to regulate the Notch signaling pathway. Can undergo ligand-dependent and non-canonical ligand-independent activation. Ligand-independent activation is dependent on endosome acidification and probably occurs in late endosomes or lysosome. Ectopic ligand-independent activation occurs when disruption of the endolysosomal pathway, particularly of the ESCRT-III complex, prevents sequestration of the receptor in intraluminal vesicles of multivesicular bodies. The sequence is that of Neurogenic locus Notch protein from Drosophila melanogaster (Fruit fly).